A 492-amino-acid chain; its full sequence is Propanoyl-CoA:succinate CoA transferase (492 aa).

Residue 260 to 264 participates in CoA binding; the sequence is GVGNI. The 5-glutamyl coenzyme A thioester intermediate role is filled by glutamate 286. CoA contacts are provided by asparagine 376 and glycine 380.

The protein belongs to the acetyl-CoA hydrolase/transferase family.

The catalysed reaction is propanoyl-CoA + succinate = propanoate + succinyl-CoA. Functionally, catalyzes the transfer of coenzyme A from propionyl-CoA to succinate. Could be part of a pathway that converts succinate to propionate. The sequence is that of Propanoyl-CoA:succinate CoA transferase from Escherichia coli (strain K12).